Here is a 418-residue protein sequence, read N- to C-terminus: Hydroxysqualene dehydroxylase (418 aa).

This sequence belongs to the HpnE family.

The enzyme catalyses squalene + FAD + H2O + H(+) = hydroxysqualene + FADH2. It functions in the pathway secondary metabolite biosynthesis; hopanoid biosynthesis. Functionally, involved in the biosynthesis of the hopanoid precursor squalene (SQ) from farnesyl diphosphate (FPP). Catalyzes the third (last) step, the reduction of hydroxysqualene (HSQ) to SQ. This is Hydroxysqualene dehydroxylase from Rhodopseudomonas palustris (strain ATCC BAA-98 / CGA009).